The sequence spans 491 residues: Aspartyl/glutamyl-tRNA(Asn/Gln) amidotransferase subunit B (491 aa).

The protein belongs to the GatB/GatE family. GatB subfamily. Heterotrimer of A, B and C subunits.

It carries out the reaction L-glutamyl-tRNA(Gln) + L-glutamine + ATP + H2O = L-glutaminyl-tRNA(Gln) + L-glutamate + ADP + phosphate + H(+). The catalysed reaction is L-aspartyl-tRNA(Asn) + L-glutamine + ATP + H2O = L-asparaginyl-tRNA(Asn) + L-glutamate + ADP + phosphate + 2 H(+). Allows the formation of correctly charged Asn-tRNA(Asn) or Gln-tRNA(Gln) through the transamidation of misacylated Asp-tRNA(Asn) or Glu-tRNA(Gln) in organisms which lack either or both of asparaginyl-tRNA or glutaminyl-tRNA synthetases. The reaction takes place in the presence of glutamine and ATP through an activated phospho-Asp-tRNA(Asn) or phospho-Glu-tRNA(Gln). This Nostoc punctiforme (strain ATCC 29133 / PCC 73102) protein is Aspartyl/glutamyl-tRNA(Asn/Gln) amidotransferase subunit B.